A 90-amino-acid chain; its full sequence is Acylphosphatase (90 aa).

In terms of domain architecture, Acylphosphatase-like spans 4 to 90 (TVHLRITGHV…KGQYKDFRIY (87 aa)). Active-site residues include Arg19 and Asn37.

The protein belongs to the acylphosphatase family.

It catalyses the reaction an acyl phosphate + H2O = a carboxylate + phosphate + H(+). The protein is Acylphosphatase (acyP) of Caldanaerobacter subterraneus subsp. tengcongensis (strain DSM 15242 / JCM 11007 / NBRC 100824 / MB4) (Thermoanaerobacter tengcongensis).